The sequence spans 599 residues: uncharacterized protein (599 aa).

An ATP-binding site is contributed by 49–56 (GPPGSGKT). In terms of domain architecture, Macro spans 416-599 (AEVRKELEYK…TKIFEEKFSV (184 aa)).

This sequence in the N-terminal section; belongs to the AAA ATPase family. RarA/MGS1/WRNIP1 subfamily.

This is an uncharacterized protein from Thermotoga maritima (strain ATCC 43589 / DSM 3109 / JCM 10099 / NBRC 100826 / MSB8).